A 334-amino-acid polypeptide reads, in one-letter code: Holliday junction branch migration complex subunit RuvB (334 aa).

Positions 4–184 are large ATPase domain (RuvB-L); sequence ADRIISASPQ…FGIVQRLEFY (181 aa). ATP contacts are provided by residues I23, R24, G65, K68, T69, T70, 131-133, R174, Y184, and R221; that span reads EDY. Residue T69 participates in Mg(2+) binding. The interval 185 to 255 is small ATPAse domain (RuvB-S); the sequence is NVDDLTSIVK…IAKQALVMLD (71 aa). The segment at 258-334 is head domain (RuvB-H); sequence PQGFDFMDIK…YAHLGISLSE (77 aa). R294, R313, and R318 together coordinate DNA.

It belongs to the RuvB family. Homohexamer. Forms an RuvA(8)-RuvB(12)-Holliday junction (HJ) complex. HJ DNA is sandwiched between 2 RuvA tetramers; dsDNA enters through RuvA and exits via RuvB. An RuvB hexamer assembles on each DNA strand where it exits the tetramer. Each RuvB hexamer is contacted by two RuvA subunits (via domain III) on 2 adjacent RuvB subunits; this complex drives branch migration. In the full resolvosome a probable DNA-RuvA(4)-RuvB(12)-RuvC(2) complex forms which resolves the HJ.

The protein localises to the cytoplasm. The enzyme catalyses ATP + H2O = ADP + phosphate + H(+). The RuvA-RuvB-RuvC complex processes Holliday junction (HJ) DNA during genetic recombination and DNA repair, while the RuvA-RuvB complex plays an important role in the rescue of blocked DNA replication forks via replication fork reversal (RFR). RuvA specifically binds to HJ cruciform DNA, conferring on it an open structure. The RuvB hexamer acts as an ATP-dependent pump, pulling dsDNA into and through the RuvAB complex. RuvB forms 2 homohexamers on either side of HJ DNA bound by 1 or 2 RuvA tetramers; 4 subunits per hexamer contact DNA at a time. Coordinated motions by a converter formed by DNA-disengaged RuvB subunits stimulates ATP hydrolysis and nucleotide exchange. Immobilization of the converter enables RuvB to convert the ATP-contained energy into a lever motion, pulling 2 nucleotides of DNA out of the RuvA tetramer per ATP hydrolyzed, thus driving DNA branch migration. The RuvB motors rotate together with the DNA substrate, which together with the progressing nucleotide cycle form the mechanistic basis for DNA recombination by continuous HJ branch migration. Branch migration allows RuvC to scan DNA until it finds its consensus sequence, where it cleaves and resolves cruciform DNA. This is Holliday junction branch migration complex subunit RuvB from Haemophilus ducreyi (strain 35000HP / ATCC 700724).